The following is a 452-amino-acid chain: FAD-linked oxidoreductase DDB_G0289697 (452 aa).

The 169-residue stretch at 44–212 (VVNTPLLIVY…TDFTFKLHPV (169 aa)) folds into the FAD-binding PCMH-type domain. At His81 the chain carries Pros-8alpha-FAD histidine.

The protein belongs to the oxygen-dependent FAD-linked oxidoreductase family. FAD serves as cofactor.

The polypeptide is FAD-linked oxidoreductase DDB_G0289697 (Dictyostelium discoideum (Social amoeba)).